A 348-amino-acid polypeptide reads, in one-letter code: Phosphate acyltransferase (348 aa).

Belongs to the PlsX family. Homodimer. Probably interacts with PlsY.

The protein resides in the cytoplasm. It catalyses the reaction a fatty acyl-[ACP] + phosphate = an acyl phosphate + holo-[ACP]. The protein operates within lipid metabolism; phospholipid metabolism. In terms of biological role, catalyzes the reversible formation of acyl-phosphate (acyl-PO(4)) from acyl-[acyl-carrier-protein] (acyl-ACP). This enzyme utilizes acyl-ACP as fatty acyl donor, but not acyl-CoA. The chain is Phosphate acyltransferase from Rhizobium leguminosarum bv. trifolii (strain WSM2304).